Here is a 174-residue protein sequence, read N- to C-terminus: Elongation factor Tu, mitochondrial (174 aa).

62–66 (DCPGH) lines the GTP pocket. Lysine 78 carries the N6-succinyllysine modification. The residue at position 103 (threonine 103) is a Phosphothreonine. Residue serine 121 is modified to Phosphoserine. The residue at position 161 (lysine 161) is an N6-acetyllysine.

It belongs to the GTP-binding elongation factor family. EF-Tu/EF-1A subfamily.

The protein localises to the mitochondrion. It carries out the reaction GTP + H2O = GDP + phosphate + H(+). GTP hydrolase that promotes the GTP-dependent binding of aminoacyl-tRNA to the A-site of ribosomes during protein biosynthesis. This Mesocricetus auratus (Golden hamster) protein is Elongation factor Tu, mitochondrial.